The primary structure comprises 197 residues: Endo-1,4-beta-xylanase A (197 aa).

In terms of domain architecture, GH11 spans 1-197 (SGTPSSTGTD…SSGTATITVT (197 aa)). The active-site Nucleophile is glutamate 87. A disulfide bond links cysteine 111 and cysteine 160. Catalysis depends on glutamate 184, which acts as the Proton donor.

Belongs to the glycosyl hydrolase 11 (cellulase G) family.

The protein resides in the secreted. The catalysed reaction is Endohydrolysis of (1-&gt;4)-beta-D-xylosidic linkages in xylans.. It functions in the pathway glycan degradation; xylan degradation. Functionally, hydrolyzes xylans into xylobiose and xylose. The sequence is that of Endo-1,4-beta-xylanase A (XYNA) from Schizophyllum commune (Split gill fungus).